Consider the following 350-residue polypeptide: Protein pelota homolog (350 aa).

It belongs to the eukaryotic release factor 1 family. Pelota subfamily. As to quaternary structure, monomer. It depends on a divalent metal cation as a cofactor.

The protein localises to the cytoplasm. Its function is as follows. May function in recognizing stalled ribosomes, interact with stem-loop structures in stalled mRNA molecules, and effect endonucleolytic cleavage of the mRNA. May play a role in the release non-functional ribosomes and degradation of damaged mRNAs. Has endoribonuclease activity. This is Protein pelota homolog from Methanosarcina mazei (strain ATCC BAA-159 / DSM 3647 / Goe1 / Go1 / JCM 11833 / OCM 88) (Methanosarcina frisia).